The primary structure comprises 555 residues: Energy-dependent translational throttle protein EttA (555 aa).

ABC transporter domains lie at 6–259 and 324–550; these read YTMH…AQEA and LEVS…RIKY. ATP is bound at residue 39 to 46; sequence GLNGAGKS. Residues 95-139 form an arm region; sequence SEVVNALKRLDEVYALYADPDADFDKLAAEQGRLEEIIQAHDGHN. A ptIM region spans residues 242–322; it reads GNYSSWLEQK…IPPGPRLGDK (81 aa). 356-363 contacts ATP; the sequence is GPNGAGKS.

Belongs to the ABC transporter superfamily. ABCF family. Translational throttle EttA subfamily. In terms of assembly, monomer. Probably contacts ribosomal proteins L1, L5, L33 and S7, the 16S and 23S rRNA and the P-site containing tRNA(fMet).

It localises to the cytoplasm. It carries out the reaction ATP + H2O = ADP + phosphate + H(+). A translation factor that gates the progression of the 70S ribosomal initiation complex (IC, containing tRNA(fMet) in the P-site) into the translation elongation cycle by using a mechanism sensitive to the ATP/ADP ratio. Binds to the 70S ribosome E-site where it modulates the state of the translating ribosome during subunit translocation. ATP hydrolysis probably frees it from the ribosome, which can enter the elongation phase. This chain is Energy-dependent translational throttle protein EttA, found in Escherichia coli O157:H7.